A 324-amino-acid polypeptide reads, in one-letter code: Acetyl-coenzyme A carboxylase carboxyl transferase subunit alpha (324 aa).

In terms of domain architecture, CoA carboxyltransferase C-terminal spans 37–291 (KLERRLDKLK…QNFILQEWLR (255 aa)).

It belongs to the AccA family. In terms of assembly, acetyl-CoA carboxylase is a heterohexamer composed of biotin carboxyl carrier protein (AccB), biotin carboxylase (AccC) and two subunits each of ACCase subunit alpha (AccA) and ACCase subunit beta (AccD).

It is found in the cytoplasm. It catalyses the reaction N(6)-carboxybiotinyl-L-lysyl-[protein] + acetyl-CoA = N(6)-biotinyl-L-lysyl-[protein] + malonyl-CoA. It participates in lipid metabolism; malonyl-CoA biosynthesis; malonyl-CoA from acetyl-CoA: step 1/1. In terms of biological role, component of the acetyl coenzyme A carboxylase (ACC) complex. First, biotin carboxylase catalyzes the carboxylation of biotin on its carrier protein (BCCP) and then the CO(2) group is transferred by the carboxyltransferase to acetyl-CoA to form malonyl-CoA. This chain is Acetyl-coenzyme A carboxylase carboxyl transferase subunit alpha, found in Chlamydia caviae (strain ATCC VR-813 / DSM 19441 / 03DC25 / GPIC) (Chlamydophila caviae).